The chain runs to 377 residues: T-protein (377 aa).

Residues 1-92 form the Chorismate mutase domain; it reads MSFMEALKDL…ESYANENQFG (92 aa). Residues 101-364 enclose the Prephenate/arogenate dehydrogenase domain; sequence HKIVIVGGYG…DYSEQFLKES (264 aa).

The protein in the C-terminal section; belongs to the prephenate/arogenate dehydrogenase family.

The protein localises to the cytoplasm. The enzyme catalyses chorismate = prephenate. It catalyses the reaction prephenate + NAD(+) = 3-(4-hydroxyphenyl)pyruvate + CO2 + NADH. It functions in the pathway amino-acid biosynthesis; L-tyrosine biosynthesis; (4-hydroxyphenyl)pyruvate from prephenate (NAD(+) route): step 1/1. It participates in metabolic intermediate biosynthesis; prephenate biosynthesis; prephenate from chorismate: step 1/1. The sequence is that of T-protein (tyrA) from Haemophilus influenzae (strain ATCC 51907 / DSM 11121 / KW20 / Rd).